Reading from the N-terminus, the 296-residue chain is Acetylglutamate kinase (296 aa).

Substrate-binding positions include glycine 67–glycine 68, arginine 89, and asparagine 194.

The protein belongs to the acetylglutamate kinase family. ArgB subfamily.

It is found in the cytoplasm. It catalyses the reaction N-acetyl-L-glutamate + ATP = N-acetyl-L-glutamyl 5-phosphate + ADP. It functions in the pathway amino-acid biosynthesis; L-arginine biosynthesis; N(2)-acetyl-L-ornithine from L-glutamate: step 2/4. Catalyzes the ATP-dependent phosphorylation of N-acetyl-L-glutamate. The polypeptide is Acetylglutamate kinase (Brucella anthropi (strain ATCC 49188 / DSM 6882 / CCUG 24695 / JCM 21032 / LMG 3331 / NBRC 15819 / NCTC 12168 / Alc 37) (Ochrobactrum anthropi)).